The following is a 410-amino-acid chain: MTQTHPIHVFSEIGKLKKVMLHRPGKEIENLMPDYLERLLFDDIPFLEDAQKEHDAFAQALRNEGVEVLYLENLAAESLTNQEIREQFIDEYIGEANVRGRATKKAIRELLLNIKDNKELIEKTMAGIQKSELPEIPSSEKGLTDLVESNYPFAIDPMPNLYFTRDPFATIGNGVSLNHMFSETRNRETLYGKYIFTHHPEYGGKVPMVYEREETTRIEGGDELVLSKDVLAVGISQRTDAASIEKLLVNIFKQNLGFKKVLAFEFANNRKFMHLDTVFTMVDYDKFTIHPEIEGDLRVYSVTYENQDLHIEEEKGDLADLLAKNLGVEKVELIRCGGDNLVAAGREQWNDGSNTLTIAPGVVIVYNRNTITNAILESKGLKLIKINGSELVRGRGGPRCMSMPFEREDL.

Residue Cys-400 is the Amidino-cysteine intermediate of the active site.

The protein belongs to the arginine deiminase family.

It is found in the cytoplasm. It carries out the reaction L-arginine + H2O = L-citrulline + NH4(+). Its pathway is amino-acid degradation; L-arginine degradation via ADI pathway; carbamoyl phosphate from L-arginine: step 1/2. This chain is Arginine deiminase, found in Streptococcus agalactiae serotype III (strain NEM316).